The sequence spans 460 residues: SPbeta prophage-derived uncharacterized protein YopQ (460 aa).

The chain is SPbeta prophage-derived uncharacterized protein YopQ (yopQ) from Bacillus subtilis (strain 168).